Consider the following 96-residue polypeptide: Co-chaperonin GroES (96 aa).

The protein belongs to the GroES chaperonin family. In terms of assembly, heptamer of 7 subunits arranged in a ring. Interacts with the chaperonin GroEL.

The protein resides in the cytoplasm. In terms of biological role, together with the chaperonin GroEL, plays an essential role in assisting protein folding. The GroEL-GroES system forms a nano-cage that allows encapsulation of the non-native substrate proteins and provides a physical environment optimized to promote and accelerate protein folding. GroES binds to the apical surface of the GroEL ring, thereby capping the opening of the GroEL channel. The chain is Co-chaperonin GroES from Streptococcus pyogenes serotype M18 (strain MGAS8232).